A 582-amino-acid polypeptide reads, in one-letter code: ATP-dependent lipid A-core flippase (582 aa).

6 helical membrane-spanning segments follow: residues 23–43, 61–81, 140–160, 163–183, 247–267, and 273–293; these read AAFI…TLFL, ILLY…SLNV, AVLV…LMFY, WQLS…VGVV, AIST…VLVI, and MLGE…IMLL. The region spanning 26–308 is the ABC transmembrane type-1 domain; it reads IAAILCMIGY…LTNVNSDFQR (283 aa). Residues 340-576 enclose the ABC transporter domain; that stretch reads IVFDDVTFSY…EGAYFQLHNL (237 aa). 374–381 lines the ATP pocket; it reads GRSGSGKS.

This sequence belongs to the ABC transporter superfamily. Lipid exporter (TC 3.A.1.106) family. In terms of assembly, homodimer.

The protein resides in the cell inner membrane. The catalysed reaction is ATP + H2O + lipid A-core oligosaccharideSide 1 = ADP + phosphate + lipid A-core oligosaccharideSide 2.. Involved in lipopolysaccharide (LPS) biosynthesis. Translocates lipid A-core from the inner to the outer leaflet of the inner membrane. Transmembrane domains (TMD) form a pore in the inner membrane and the ATP-binding domain (NBD) is responsible for energy generation. The sequence is that of ATP-dependent lipid A-core flippase from Idiomarina loihiensis (strain ATCC BAA-735 / DSM 15497 / L2-TR).